A 147-amino-acid polypeptide reads, in one-letter code: 3-dehydroquinate dehydratase (147 aa).

The active-site Proton acceptor is the Tyr26. The substrate site is built by Asn77, His83, and Asp90. His103 acts as the Proton donor in catalysis. Substrate is bound by residues 104 to 105 (LS) and Arg114.

This sequence belongs to the type-II 3-dehydroquinase family. Homododecamer.

It catalyses the reaction 3-dehydroquinate = 3-dehydroshikimate + H2O. It functions in the pathway metabolic intermediate biosynthesis; chorismate biosynthesis; chorismate from D-erythrose 4-phosphate and phosphoenolpyruvate: step 3/7. Functionally, catalyzes a trans-dehydration via an enolate intermediate. This chain is 3-dehydroquinate dehydratase, found in Proteus mirabilis (strain HI4320).